The chain runs to 323 residues: Fructose-1,6-bisphosphatase class 1 (323 aa).

Positions 88, 107, 109, and 110 each coordinate Mg(2+). Substrate is bound by residues 110-113 and N200; that span reads DGSS. E272 contacts Mg(2+).

Belongs to the FBPase class 1 family. In terms of assembly, homotetramer. The cofactor is Mg(2+).

The protein localises to the cytoplasm. The enzyme catalyses beta-D-fructose 1,6-bisphosphate + H2O = beta-D-fructose 6-phosphate + phosphate. It functions in the pathway carbohydrate biosynthesis; gluconeogenesis. This Acinetobacter baumannii (strain AYE) protein is Fructose-1,6-bisphosphatase class 1.